The primary structure comprises 237 residues: Phosphatidylserine decarboxylase proenzyme (237 aa).

Serine 206 serves as the catalytic Schiff-base intermediate with substrate; via pyruvic acid. The residue at position 206 (serine 206) is a Pyruvic acid (Ser); by autocatalysis.

It belongs to the phosphatidylserine decarboxylase family. PSD-A subfamily. As to quaternary structure, heterodimer of a large membrane-associated beta subunit and a small pyruvoyl-containing alpha subunit. Requires pyruvate as cofactor. Post-translationally, is synthesized initially as an inactive proenzyme. Formation of the active enzyme involves a self-maturation process in which the active site pyruvoyl group is generated from an internal serine residue via an autocatalytic post-translational modification. Two non-identical subunits are generated from the proenzyme in this reaction, and the pyruvate is formed at the N-terminus of the alpha chain, which is derived from the carboxyl end of the proenzyme. The post-translation cleavage follows an unusual pathway, termed non-hydrolytic serinolysis, in which the side chain hydroxyl group of the serine supplies its oxygen atom to form the C-terminus of the beta chain, while the remainder of the serine residue undergoes an oxidative deamination to produce ammonia and the pyruvoyl prosthetic group on the alpha chain.

The protein localises to the cell membrane. The enzyme catalyses a 1,2-diacyl-sn-glycero-3-phospho-L-serine + H(+) = a 1,2-diacyl-sn-glycero-3-phosphoethanolamine + CO2. It functions in the pathway phospholipid metabolism; phosphatidylethanolamine biosynthesis; phosphatidylethanolamine from CDP-diacylglycerol: step 2/2. In terms of biological role, catalyzes the formation of phosphatidylethanolamine (PtdEtn) from phosphatidylserine (PtdSer). This is Phosphatidylserine decarboxylase proenzyme from Rhodococcus erythropolis (strain PR4 / NBRC 100887).